The chain runs to 399 residues: E3 ubiquitin-protein ligase APD4 (399 aa).

The next 2 membrane-spanning stretches (helical) occupy residues 42–62 and 284–304; these read FGIIMGLWFFASVCLIFGVYG and LIAYGSFTGVLLSFMLVAIHF. The segment at 348–387 adopts an RING-type zinc-finger fold; that stretch reads CAICFDAPRDCCFLPCGHCVSCYQCGTKIKRTKGRCPICR.

As to expression, expressed in the shoot apical meristems (SAM), root tips and inflorescences.

Its subcellular location is the endomembrane system. It is found in the vacuole membrane. It carries out the reaction S-ubiquitinyl-[E2 ubiquitin-conjugating enzyme]-L-cysteine + [acceptor protein]-L-lysine = [E2 ubiquitin-conjugating enzyme]-L-cysteine + N(6)-ubiquitinyl-[acceptor protein]-L-lysine.. It functions in the pathway protein modification; protein ubiquitination. Its function is as follows. Involved in pollen mitosis II (PMII) regulation during male gametogenesis. The sequence is that of E3 ubiquitin-protein ligase APD4 from Arabidopsis thaliana (Mouse-ear cress).